A 266-amino-acid polypeptide reads, in one-letter code: Protein crossbronx-like (266 aa).

A UBC core domain is found at 15-178 (KQGYHILAEY…VQEQAILSRN (164 aa)). Residues 234–266 (SSRQLDEEEANQVEKLHRGRIPEHQREESEVSL) are disordered. Residues 245-266 (QVEKLHRGRIPEHQREESEVSL) are compositionally biased toward basic and acidic residues.

Belongs to the ubiquitin-conjugating enzyme family. FTS subfamily.

This chain is Protein crossbronx-like, found in Drosophila melanogaster (Fruit fly).